The chain runs to 456 residues: UDP-N-acetylmuramate--L-alanine ligase (456 aa).

112 to 118 is an ATP binding site; sequence GAHGKTS.

It belongs to the MurCDEF family.

The protein resides in the cytoplasm. It catalyses the reaction UDP-N-acetyl-alpha-D-muramate + L-alanine + ATP = UDP-N-acetyl-alpha-D-muramoyl-L-alanine + ADP + phosphate + H(+). It participates in cell wall biogenesis; peptidoglycan biosynthesis. Cell wall formation. The chain is UDP-N-acetylmuramate--L-alanine ligase from Desulforapulum autotrophicum (strain ATCC 43914 / DSM 3382 / VKM B-1955 / HRM2) (Desulfobacterium autotrophicum).